We begin with the raw amino-acid sequence, 126 residues long: Fluoride-specific ion channel FluC (126 aa).

4 consecutive transmembrane segments (helical) span residues 6–26 (FVAV…FSVL), 36–56 (YGTL…VGFF), 69–89 (LAIT…SEVV), and 99–119 (WAAM…ALGL). Positions 76 and 79 each coordinate Na(+).

Belongs to the fluoride channel Fluc/FEX (TC 1.A.43) family.

It localises to the cell inner membrane. It catalyses the reaction fluoride(in) = fluoride(out). Na(+) is not transported, but it plays an essential structural role and its presence is essential for fluoride channel function. Functionally, fluoride-specific ion channel. Important for reducing fluoride concentration in the cell, thus reducing its toxicity. This is Fluoride-specific ion channel FluC from Cupriavidus taiwanensis (strain DSM 17343 / BCRC 17206 / CCUG 44338 / CIP 107171 / LMG 19424 / R1) (Ralstonia taiwanensis (strain LMG 19424)).